A 120-amino-acid polypeptide reads, in one-letter code: Large ribosomal subunit protein eL34z (120 aa).

The segment at 31–51 is disordered; sequence VYQTTKKRASGPKCPVTGKRI.

Belongs to the eukaryotic ribosomal protein eL34 family.

This chain is Large ribosomal subunit protein eL34z (RPL34A), found in Arabidopsis thaliana (Mouse-ear cress).